The sequence spans 205 residues: Ribosomal RNA small subunit methyltransferase G (205 aa).

Residues Gly-76, Leu-81, 127 to 128 (IE), and Arg-140 each bind S-adenosyl-L-methionine.

The protein belongs to the methyltransferase superfamily. RNA methyltransferase RsmG family.

The protein localises to the cytoplasm. It carries out the reaction guanosine(527) in 16S rRNA + S-adenosyl-L-methionine = N(7)-methylguanosine(527) in 16S rRNA + S-adenosyl-L-homocysteine. Specifically methylates the N7 position of guanine in position 527 of 16S rRNA. The polypeptide is Ribosomal RNA small subunit methyltransferase G (Francisella tularensis subsp. tularensis (strain WY96-3418)).